The primary structure comprises 192 residues: Nucleotidase CA_C3379 (192 aa).

It belongs to the 5'(3')-deoxyribonucleotidase family. Mg(2+) is required as a cofactor.

The enzyme catalyses sugar phosphate + H2O = sugar + phosphate.. Functionally, catalyzes the dephosphorylation of nucleotide monophosphates and of different sugar phosphates in vitro. The protein is Nucleotidase CA_C3379 of Clostridium acetobutylicum (strain ATCC 824 / DSM 792 / JCM 1419 / IAM 19013 / LMG 5710 / NBRC 13948 / NRRL B-527 / VKM B-1787 / 2291 / W).